Reading from the N-terminus, the 105-residue chain is dATP/dGTP diphosphohydrolase (105 aa).

Belongs to the Caudovirales dATP/dGTP diphosphohydrolase family. It depends on Co(2+) as a cofactor.

It carries out the reaction dGTP + H2O = dGMP + diphosphate + H(+). The catalysed reaction is dATP + H2O = dAMP + diphosphate + H(+). It participates in purine metabolism. In terms of biological role, catalyzes the hydrolysis of dGTP into dGMP, which is needed among other for the first step of biosynthesis of dZTP (2-amino-2'-deoxyadenosine-5'-triphosphate). This Cyanophage S-2L (Cyanobacteria phage S-2L) protein is dATP/dGTP diphosphohydrolase.